An 888-amino-acid polypeptide reads, in one-letter code: 3-hydroxy-3-methylglutaryl-coenzyme A reductase (888 aa).

Residues 1–9 (MLSRLFRMH) are Cytoplasmic-facing. Residues 10-39 (GLFVASHPWEVIVGTVTLTICMMSMNMFTG) form a helical membrane-spanning segment. Topologically, residues 40-56 (NNKICGWNYECPKLEED) are lumenal. The chain crosses the membrane as a helical span at residues 57 to 78 (VLSSDIIILTITRCIAILYIYF). In terms of domain architecture, SSD spans 61–218 (DIIILTITRC…MTFFPACVSL (158 aa)). The INSIG-binding motif signature appears at 75 to 78 (YIYF). At 79–89 (QFQNLRQLGSK) the chain is on the cytoplasmic side. Lys-89 participates in a covalent cross-link: Glycyl lysine isopeptide (Lys-Gly) (interchain with G-Cter in ubiquitin). A helical transmembrane segment spans residues 90–114 (YILGIAGLFTIFSSFVFSTVVIHFL). At 115–123 (DKELTGLNE) the chain is on the lumenal side. The chain crosses the membrane as a helical span at residues 124-149 (ALPFFLLLVDLSRASALAKFALSSNS). Over 150-159 (QDEVRENIAR) the chain is Cytoplasmic. Residues 160 to 187 (GMAILGPTFTLDALVECLVIGVGTMSGV) traverse the membrane as a helical segment. Topologically, residues 188–191 (RQLE) are lumenal. The chain crosses the membrane as a helical span at residues 192 to 220 (IMCCFGCMSVLANYFVFMTFFPACVSLVL). The Cytoplasmic segment spans residues 221 to 248 (ELSRESREGRPIWQLSHFARVLEEEENK). Lys-248 is covalently cross-linked (Glycyl lysine isopeptide (Lys-Gly) (interchain with G-Cter in ubiquitin)). The chain crosses the membrane as a helical span at residues 249–275 (PNPVTQRVKMIMSLGLVLVHAHSRWIA). The Lumenal segment spans residues 276–314 (DPSPQNSTADNSKVSLGLDENVSKRIEPSVSLWQFYLSK). 2 N-linked (GlcNAc...) asparagine glycosylation sites follow: Asn-281 and Asn-296. A helical transmembrane segment spans residues 315–339 (MISMDIEQVITLSLALLLAVKYIFF). Residues 340-888 (EQAETESTLS…LQGTCTKKAA (549 aa)) lie on the Cytoplasmic side of the membrane. Active-site charge relay system residues include Glu-559, Lys-691, and Asp-767. The active-site Proton donor is the His-866. The residue at position 872 (Ser-872) is a Phosphoserine; by AMPK.

Belongs to the HMG-CoA reductase family. Homotetramer. Homodimer. Interacts (via its SSD) with INSIG1; the interaction, accelerated by sterols, leads to the recruitment of HMGCR to AMFR/gp78 for its ubiquitination by the sterol-mediated ERAD pathway. Interacts with UBIAD1. Undergoes sterol-mediated ubiquitination and ER-associated degradation (ERAD). Accumulation of sterols in the endoplasmic reticulum (ER) membrane, triggers binding of the reductase to the ER membrane protein INSIG1 or INSIG2. The INSIG1 binding leads to the recruitment of the ubiquitin ligase, AMFR/gp78, RNF139 or RNF145, initiating ubiquitination of the reductase. The ubiquitinated reductase is then extracted from the ER membrane and delivered to cytosolic 26S proteosomes by a mechanism probably mediated by the ATPase Valosin-containing protein VCP/p97. The INSIG2-binding leads to the recruitment of the ubiquitin ligase RNF139, initiating ubiquitination of the reductase. Lys-248 is the main site of ubiquitination. Ubiquitination is enhanced by the presence of a geranylgeranylated protein. In terms of processing, N-glycosylated. Deglycosylated by NGLY1 on release from the endoplasmic reticulum (ER) in a sterol-mediated manner. Post-translationally, phosphorylated. Phosphorylation at Ser-872 reduces the catalytic activity.

Its subcellular location is the endoplasmic reticulum membrane. It localises to the peroxisome membrane. The catalysed reaction is (R)-mevalonate + 2 NADP(+) + CoA = (3S)-3-hydroxy-3-methylglutaryl-CoA + 2 NADPH + 2 H(+). Its pathway is metabolic intermediate biosynthesis; (R)-mevalonate biosynthesis; (R)-mevalonate from acetyl-CoA: step 3/3. Its activity is regulated as follows. Regulated by a negative feedback mechanism through sterols and non-sterol metabolites derived from mevalonate. Phosphorylation at Ser-872 down-regulates the catalytic activity. Catalyzes the conversion of (3S)-hydroxy-3-methylglutaryl-CoA (HMG-CoA) to mevalonic acid, the rate-limiting step in the synthesis of cholesterol and other isoprenoids, thus plays a critical role in cellular cholesterol homeostasis. The protein is 3-hydroxy-3-methylglutaryl-coenzyme A reductase (HMGCR) of Bos taurus (Bovine).